The chain runs to 326 residues: Olfactory receptor 11H12 (326 aa).

Residues 1 to 44 are Extracellular-facing; it reads MCPLTLQVTGLMNVSEPNSSFAFVNEFILQGFTCEWTIQIFLFS. 2 N-linked (GlcNAc...) asparagine glycosylation sites follow: N13 and N18. The helical transmembrane segment at 45-65 threads the bilayer; sequence LFTTTYALTITGNGAIAFVLW. Topologically, residues 66 to 72 are cytoplasmic; the sequence is CDWRLHT. Residues 73-93 traverse the membrane as a helical segment; that stretch reads PMYMFLGNFSFLEIWYVSSTV. At 94 to 112 the chain is on the extracellular side; sequence PKMLVNFLSEKKNISFAGC. The N-linked (GlcNAc...) asparagine glycan is linked to N106. Cysteines 112 and 194 form a disulfide. A helical membrane pass occupies residues 113-133; it reads FLQFYFFFSLGTSECLLLTVM. Residues 134 to 158 are Cytoplasmic-facing; it reads AFDQYLAICRPLLYPNIMTGHLCAK. Residues 159–179 form a helical membrane-spanning segment; it reads LVILCWVCGFLWFLIPIVLIS. Residues 180 to 216 lie on the Extracellular side of the membrane; that stretch reads QMPFCGPNIIDHVVCDPGPRFALDCVSAPRIQLFCYT. A helical transmembrane segment spans residues 217–237; sequence LSSLVIFGNFLFIIGSYTLVL. Topologically, residues 238-259 are cytoplasmic; sequence KAVLGMPSSTGRHKAFSTCGSH. The helical transmembrane segment at 260–280 threads the bilayer; it reads LAVVSLCYSSLMVMYVSPGLG. Residues 281–287 are Extracellular-facing; it reads HSTGMQK. Residues 288–308 traverse the membrane as a helical segment; it reads IETLFYAMVTPLFNPLIYSLQ. Residues 309–326 are Cytoplasmic-facing; that stretch reads NKEIKAALRKVLGSSNII.

This sequence belongs to the G-protein coupled receptor 1 family.

It is found in the cell membrane. Functionally, odorant receptor. This Homo sapiens (Human) protein is Olfactory receptor 11H12 (OR11H12).